Reading from the N-terminus, the 234-residue chain is LexA repressor (234 aa).

Residues 1-11 (MNEATSHEGPK) are compositionally biased toward basic and acidic residues. The disordered stretch occupies residues 1-34 (MNEATSHEGPKRSLPGRPPGIRADSSGLTDRQRR). The H-T-H motif DNA-binding region spans 52–72 (MREIGQAVGLSSTSSVAHQLM). Over residues 83 to 94 (DPHRPRAYEVRG) the composition is skewed to basic and acidic residues. Residues 83–109 (DPHRPRAYEVRGSDQSSSVQPTDTAGK) form a disordered region. Positions 95–105 (SDQSSSVQPTD) are enriched in polar residues. Residues Ser-158 and Lys-195 each act as for autocatalytic cleavage activity in the active site.

It belongs to the peptidase S24 family. Homodimer.

The enzyme catalyses Hydrolysis of Ala-|-Gly bond in repressor LexA.. Represses a number of genes involved in the response to DNA damage (SOS response), including recA and lexA. In the presence of single-stranded DNA, RecA interacts with LexA causing an autocatalytic cleavage which disrupts the DNA-binding part of LexA, leading to derepression of the SOS regulon and eventually DNA repair. This Streptomyces avermitilis (strain ATCC 31267 / DSM 46492 / JCM 5070 / NBRC 14893 / NCIMB 12804 / NRRL 8165 / MA-4680) protein is LexA repressor.